Reading from the N-terminus, the 383-residue chain is MKRNILAVLIPALLAAGAANAAEIYNKDGNKLDLYGKVKAMRYLSDADSNASNNADKSYTRIGFKGQTLINDQLTGYGQWEYNFSLSNSESSSDAQSGNKTRLGFAGLKLKDYGSVDYGRNYGVIYDVEAFTDMMPEFGATGYTRTDTYMLTRGNSMLTWRNSDFFGLVDGLKIALQYQGKNEGSGTRATNVSNGDGYGASLSYKIVEGLTINGAMSSSNRLNANSASSTTSQKMAAYGSGGRAEAWATGLKYDANGVYLAGTYAETRNTNPFSGASYTFAGNSTATAVSGYANKVQNTELVAQYQFDSGLRPSLAYVQTKAKDIENGIGDADLSKFVDVAATYYFNKNMSAFVDYKVNLLSDSNKLHLNTDDIVAVGLVYQF.

Positions 1-21 (MKRNILAVLIPALLAAGAANA) are cleaved as a signal peptide. Residues 22-30 (AEIYNKDGN) lie on the Periplasmic side of the membrane. The beta stranded transmembrane segment at 31-45 (KLDLYGKVKAMRYLS) threads the bilayer. At 46 to 58 (DADSNASNNADKS) the chain is on the extracellular side. The chain crosses the membrane as a beta stranded span at residues 59–70 (YTRIGFKGQTLI). Residues 71-74 (NDQL) lie on the Periplasmic side of the membrane. Residues 75 to 86 (TGYGQWEYNFSL) form a beta stranded membrane-spanning segment. Topologically, residues 87–100 (SNSESSSDAQSGNK) are extracellular. The chain crosses the membrane as a beta stranded span at residues 101 to 109 (TRLGFAGLK). At 110-112 (LKD) the chain is on the periplasmic side. The chain crosses the membrane as a beta stranded span at residues 113 to 122 (YGSVDYGRNY). Residues 123–155 (GVIYDVEAFTDMMPEFGATGYTRTDTYMLTRGN) are Extracellular-facing. Residues 156–164 (SMLTWRNSD) traverse the membrane as a beta stranded segment. Topologically, residues 165 to 171 (FFGLVDG) are periplasmic. A beta stranded transmembrane segment spans residues 172–178 (LKIALQY). Residues 179-198 (QGKNEGSGTRATNVSNGDGY) lie on the Extracellular side of the membrane. Residues 199 to 206 (GASLSYKI) traverse the membrane as a beta stranded segment. Over 207–209 (VEG) the chain is Periplasmic. A beta stranded transmembrane segment spans residues 210 to 219 (LTINGAMSSS). The Extracellular segment spans residues 220-243 (NRLNANSASSTTSQKMAAYGSGGR). Residues 244-252 (AEAWATGLK) traverse the membrane as a beta stranded segment. The Periplasmic portion of the chain corresponds to 253-258 (YDANGV). Residues 259–268 (YLAGTYAETR) traverse the membrane as a beta stranded segment. The Extracellular segment spans residues 269–296 (NTNPFSGASYTFAGNSTATAVSGYANKV). Residues 297–307 (QNTELVAQYQF) traverse the membrane as a beta stranded segment. Topologically, residues 308–310 (DSG) are periplasmic. The beta stranded transmembrane segment at 311-319 (LRPSLAYVQ) threads the bilayer. The Extracellular portion of the chain corresponds to 320 to 335 (TKAKDIENGIGDADLS). A beta stranded transmembrane segment spans residues 336-346 (KFVDVAATYYF). Residues 347–351 (NKNMS) lie on the Periplasmic side of the membrane. A beta stranded transmembrane segment spans residues 352–361 (AFVDYKVNLL). The Extracellular portion of the chain corresponds to 362–372 (SDSNKLHLNTD). The chain crosses the membrane as a beta stranded span at residues 373-383 (DIVAVGLVYQF).

Belongs to the Gram-negative porin family. As to quaternary structure, homotrimer.

Its subcellular location is the cell outer membrane. Functionally, may play an important role in maintaining pathogenicity in plants. The polypeptide is Outer membrane protein Omp-EA (omp-EA) (Erwinia amylovora (Fire blight bacteria)).